Reading from the N-terminus, the 399-residue chain is 3-methyl-2-oxobutanoate hydroxymethyltransferase 2, mitochondrial (399 aa).

Residues 1–90 constitute a mitochondrion transit peptide; the sequence is MSFSRLLTPR…ARRVTLATLR (90 aa). The Mg(2+) site is built by D125 and D164. 3-methyl-2-oxobutanoate is bound by residues 125–126, D164, and K194; that span reads DS. Residue E196 coordinates Mg(2+). E264 serves as the catalytic Proton acceptor.

The protein belongs to the PanB family. It depends on Mg(2+) as a cofactor.

The protein resides in the mitochondrion. It carries out the reaction 3-methyl-2-oxobutanoate + (6R)-5,10-methylene-5,6,7,8-tetrahydrofolate + H2O = 2-dehydropantoate + (6S)-5,6,7,8-tetrahydrofolate. The protein operates within cofactor biosynthesis; (R)-pantothenate biosynthesis; (R)-pantoate from 3-methyl-2-oxobutanoate: step 1/2. Its function is as follows. Catalyzes the reversible reaction in which hydroxymethyl group from 5,10-methylenetetrahydrofolate is transferred onto alpha-ketoisovalerate to form ketopantoate. The polypeptide is 3-methyl-2-oxobutanoate hydroxymethyltransferase 2, mitochondrial (KPHMT2) (Oryza sativa subsp. japonica (Rice)).